A 264-amino-acid polypeptide reads, in one-letter code: Thymidylate synthase (264 aa).

Position 21 (Arg-21) interacts with dUMP. Residue His-51 coordinates (6R)-5,10-methylene-5,6,7,8-tetrahydrofolate. Residue 126–127 (RR) participates in dUMP binding. Cys-146 (nucleophile) is an active-site residue. DUMP is bound by residues 166–169 (RSCD), Asn-177, and 207–209 (HLY). Asp-169 provides a ligand contact to (6R)-5,10-methylene-5,6,7,8-tetrahydrofolate. Residue Ala-263 participates in (6R)-5,10-methylene-5,6,7,8-tetrahydrofolate binding.

The protein belongs to the thymidylate synthase family. Bacterial-type ThyA subfamily. Homodimer.

The protein localises to the cytoplasm. The enzyme catalyses dUMP + (6R)-5,10-methylene-5,6,7,8-tetrahydrofolate = 7,8-dihydrofolate + dTMP. It functions in the pathway pyrimidine metabolism; dTTP biosynthesis. Catalyzes the reductive methylation of 2'-deoxyuridine-5'-monophosphate (dUMP) to 2'-deoxythymidine-5'-monophosphate (dTMP) while utilizing 5,10-methylenetetrahydrofolate (mTHF) as the methyl donor and reductant in the reaction, yielding dihydrofolate (DHF) as a by-product. This enzymatic reaction provides an intracellular de novo source of dTMP, an essential precursor for DNA biosynthesis. The polypeptide is Thymidylate synthase (Cronobacter sakazakii (strain ATCC BAA-894) (Enterobacter sakazakii)).